Here is a 259-residue protein sequence, read N- to C-terminus: O-antigen export system permease protein RfbA (259 aa).

The next 6 helical transmembrane spans lie at 33–53 (LGYL…YFIF), 73–95 (FPWQ…NAQI), 111–131 (VMME…FLFV), 142–162 (WGIP…SIIF), 176–196 (VSLG…SDMI), and 228–248 (EYIS…LSIF). Positions 33-251 (LGYLWSVANP…VVGLSIFNKL (219 aa)) constitute an ABC transmembrane type-2 domain.

The protein belongs to the ABC-2 integral membrane protein family.

Its subcellular location is the cell inner membrane. May form an ATP-driven O-antigen export apparatus, in association with RfbB. The protein is O-antigen export system permease protein RfbA (rfbA) of Klebsiella pneumoniae.